A 473-amino-acid chain; its full sequence is MGRTLYDKIWDEHVVHTEEDGTSILYIDRHLVHEVTSPQAFEGLREAGRKVWRISSIVATADHNTPTTGWELGYDGITDLVSKEQITTLDANIKEFGAAAFFPFLSKRQGIVHVIGPESGATLPGMTVVCGDSHTSTHGAFGALAHGIGTSEVEHVMATQTLLAKKAKNLLIKVEGTLPKGCTAKDIVLAIIGKIGTAGGTGYTIEFAGSAIRALSMEGRMTVCNMAIEGGARAGLVAVDQKTIDYVKGRLLAPTGVEWDQAVQYWATLHSDADAKFDAVVELDASQILPQVTWGTSPEMVLSIEDRVPDPDKEKDANKRGAIERALTYMGLQPGKALNDLYVDKVFIGSCTNSRIEDMREAAAIVKKLGQKVAKNVKLAMVVPGSGLVKEQAEREGLDKIFVAAGFEWREPGCSMCLAMNADRLEPGERCASTSNRNFEGRQGAGGRTHLVSPAMAAAAAVHGHFVDVRKFV.

Residues Cys351, Cys414, and Cys417 each coordinate [4Fe-4S] cluster.

This sequence belongs to the aconitase/IPM isomerase family. LeuC type 1 subfamily. In terms of assembly, heterodimer of LeuC and LeuD. [4Fe-4S] cluster is required as a cofactor.

It catalyses the reaction (2R,3S)-3-isopropylmalate = (2S)-2-isopropylmalate. The protein operates within amino-acid biosynthesis; L-leucine biosynthesis; L-leucine from 3-methyl-2-oxobutanoate: step 2/4. Functionally, catalyzes the isomerization between 2-isopropylmalate and 3-isopropylmalate, via the formation of 2-isopropylmaleate. This chain is 3-isopropylmalate dehydratase large subunit, found in Polaromonas sp. (strain JS666 / ATCC BAA-500).